We begin with the raw amino-acid sequence, 159 residues long: Cyclic pyranopterin monophosphate synthase (159 aa).

Substrate is bound by residues 76–78 (LCH) and 114–115 (ME). Residue aspartate 129 is part of the active site.

Belongs to the MoaC family. As to quaternary structure, homohexamer; trimer of dimers.

It carries out the reaction (8S)-3',8-cyclo-7,8-dihydroguanosine 5'-triphosphate = cyclic pyranopterin phosphate + diphosphate. Its pathway is cofactor biosynthesis; molybdopterin biosynthesis. Catalyzes the conversion of (8S)-3',8-cyclo-7,8-dihydroguanosine 5'-triphosphate to cyclic pyranopterin monophosphate (cPMP). The polypeptide is Cyclic pyranopterin monophosphate synthase (Shewanella oneidensis (strain ATCC 700550 / JCM 31522 / CIP 106686 / LMG 19005 / NCIMB 14063 / MR-1)).